We begin with the raw amino-acid sequence, 727 residues long: Glycerol-3-phosphate dehydrogenase, mitochondrial (727 aa).

Residues 1–42 (MAFQKAVKGTILVGGGALATVLGLSQFAHYRRKQMNLAYVKA) constitute a mitochondrion transit peptide. 71 to 99 (DILVIGGGATGSGCALDAVTRGLKTALVE) lines the FAD pocket. Y601 carries the phosphotyrosine modification. 2 consecutive EF-hand domains span residues 623-658 (SDIDRYKKRFHKFDADQKGFITIVDVQRVLESINVQ) and 659-694 (MDENTLHEILNEVDLNKNGQVELNEFLQLMSAIQKG). The Ca(2+) site is built by D672, N674, N676, Q678, and E683.

The protein belongs to the FAD-dependent glycerol-3-phosphate dehydrogenase family. The cofactor is FAD.

It localises to the mitochondrion. It carries out the reaction a quinone + sn-glycerol 3-phosphate = dihydroxyacetone phosphate + a quinol. It functions in the pathway polyol metabolism; glycerol degradation via glycerol kinase pathway; glycerone phosphate from sn-glycerol 3-phosphate (anaerobic route): step 1/1. With respect to regulation, calcium-binding enhance the activity of the enzyme. In terms of biological role, calcium-responsive mitochondrial glycerol-3-phosphate dehydrogenase which seems to be a key component of the pancreatic beta-cell glucose-sensing device. This chain is Glycerol-3-phosphate dehydrogenase, mitochondrial, found in Homo sapiens (Human).